Consider the following 487-residue polypeptide: Malonate-semialdehyde dehydrogenase (487 aa).

NAD(+)-binding residues include Ala-150, Phe-152, Lys-176, Glu-179, Arg-180, Ser-229, and Thr-251. The Nucleophile role is filled by Cys-284. Glu-382 is an NAD(+) binding site.

It belongs to the aldehyde dehydrogenase family. IolA subfamily. Homotetramer.

The enzyme catalyses 3-oxopropanoate + NAD(+) + CoA + H2O = hydrogencarbonate + acetyl-CoA + NADH + H(+). The catalysed reaction is 2-methyl-3-oxopropanoate + NAD(+) + CoA + H2O = propanoyl-CoA + hydrogencarbonate + NADH + H(+). It participates in polyol metabolism; myo-inositol degradation into acetyl-CoA; acetyl-CoA from myo-inositol: step 7/7. In terms of biological role, catalyzes the oxidation of malonate semialdehyde (MSA) and methylmalonate semialdehyde (MMSA) into acetyl-CoA and propanoyl-CoA, respectively. Is involved in a myo-inositol catabolic pathway. Bicarbonate, and not CO2, is the end-product of the enzymatic reaction. The protein is Malonate-semialdehyde dehydrogenase of Bacillus velezensis (strain DSM 23117 / BGSC 10A6 / LMG 26770 / FZB42) (Bacillus amyloliquefaciens subsp. plantarum).